The primary structure comprises 286 residues: Bifunctional protein FolD (286 aa).

NADP(+) is bound by residues 165–167 (GRS), Ser-190, and Ile-231.

Belongs to the tetrahydrofolate dehydrogenase/cyclohydrolase family. Homodimer.

It carries out the reaction (6R)-5,10-methylene-5,6,7,8-tetrahydrofolate + NADP(+) = (6R)-5,10-methenyltetrahydrofolate + NADPH. The enzyme catalyses (6R)-5,10-methenyltetrahydrofolate + H2O = (6R)-10-formyltetrahydrofolate + H(+). The protein operates within one-carbon metabolism; tetrahydrofolate interconversion. Functionally, catalyzes the oxidation of 5,10-methylenetetrahydrofolate to 5,10-methenyltetrahydrofolate and then the hydrolysis of 5,10-methenyltetrahydrofolate to 10-formyltetrahydrofolate. This Thermodesulfovibrio yellowstonii (strain ATCC 51303 / DSM 11347 / YP87) protein is Bifunctional protein FolD.